We begin with the raw amino-acid sequence, 610 residues long: UvrABC system protein C (610 aa).

In terms of domain architecture, GIY-YIG spans 16 to 94 (SQPGVYRMYD…IKLYQPRYNV (79 aa)). The 36-residue stretch at 204–239 (DQVLTQLIARMEKASQDLAFEEAARIRDQIQAVRRV) folds into the UVR domain.

This sequence belongs to the UvrC family. Interacts with UvrB in an incision complex.

The protein resides in the cytoplasm. Functionally, the UvrABC repair system catalyzes the recognition and processing of DNA lesions. UvrC both incises the 5' and 3' sides of the lesion. The N-terminal half is responsible for the 3' incision and the C-terminal half is responsible for the 5' incision. The protein is UvrABC system protein C of Salmonella typhimurium (strain LT2 / SGSC1412 / ATCC 700720).